The primary structure comprises 489 residues: NADH-quinone oxidoreductase subunit N (489 aa).

The next 14 membrane-spanning stretches (helical) occupy residues 6–26 (VLFIAELPLLLTALTAIAVML), 37–57 (VFYITVIGLNAALFSLLPASS), 66–86 (LLIVDSYSVFYSALILIGSLA), 105–125 (FYLLLSLASTGAMVMAQAHHL), 127–147 (AIFIGVELMSLPLFGLVGYAF), 159–179 (YMVLSASATAFLLFGIALIYA), 204–224 (ITLLIVGLGMVVIGFGFKLSL), 239–259 (PAPVTTYLATVSKIAVFAVLL), 271–291 (FFYSLLGGLAFISIIIGNLLA), 299–319 (RLLGFSSTAHFGYLLVALIAC), 329–349 (VALYLVMYLLTSVGSFGVVSL), 377–397 (SAMTIMFLSLAGIPMTLGFIG), 408–430 (FHLWWLTGAVVFGSAVGLYYYLR), and 452–472 (ALTTGGFMVLTSAILVVLLGI).

It belongs to the complex I subunit 2 family. NDH-1 is composed of 14 different subunits. Subunits NuoA, H, J, K, L, M, N constitute the membrane sector of the complex.

The protein resides in the cell inner membrane. The enzyme catalyses a quinone + NADH + 5 H(+)(in) = a quinol + NAD(+) + 4 H(+)(out). Its function is as follows. NDH-1 shuttles electrons from NADH, via FMN and iron-sulfur (Fe-S) centers, to quinones in the respiratory chain. The immediate electron acceptor for the enzyme in this species is believed to be ubiquinone. Couples the redox reaction to proton translocation (for every two electrons transferred, four hydrogen ions are translocated across the cytoplasmic membrane), and thus conserves the redox energy in a proton gradient. This chain is NADH-quinone oxidoreductase subunit N, found in Tolumonas auensis (strain DSM 9187 / NBRC 110442 / TA 4).